Here is a 217-residue protein sequence, read N- to C-terminus: Dual specificity phosphatase 29 (217 aa).

The 149-residue stretch at 46-194 folds into the Tyrosine-protein phosphatase domain; it reads HVNEVWPNLY…LRELDIKLAL (149 aa). 138 to 145 contacts substrate; the sequence is HCAMGRSR. The active-site Phosphocysteine intermediate is cysteine 139.

Belongs to the protein-tyrosine phosphatase family. Non-receptor class dual specificity subfamily.

It localises to the cytoplasm. The protein localises to the nucleus. The enzyme catalyses O-phospho-L-tyrosyl-[protein] + H2O = L-tyrosyl-[protein] + phosphate. It carries out the reaction O-phospho-L-seryl-[protein] + H2O = L-seryl-[protein] + phosphate. It catalyses the reaction O-phospho-L-threonyl-[protein] + H2O = L-threonyl-[protein] + phosphate. In terms of biological role, dual specificity phosphatase able to dephosphorylate phosphotyrosine, phosphoserine and phosphothreonine residues within the same substrate, with a preference for phosphotyrosine as a substrate. Involved in the modulation of AMPK and MAPK1/2 signaling pathways. The protein is Dual specificity phosphatase 29 (DUSP29) of Anolis carolinensis (Green anole).